The primary structure comprises 442 residues: Glycolipid 2-alpha-mannosyltransferase (442 aa).

The Cytoplasmic portion of the chain corresponds to 1-11 (MALFLSKRLLR). The helical; Signal-anchor for type II membrane protein transmembrane segment at 12–30 (FTVIAGAVIVLLLTLNSNS) threads the bilayer. The interval 31-118 (RTQQYIPSSI…YITPSFANKA (88 aa)) is stem region. The Lumenal segment spans residues 31 to 442 (RTQQYIPSSI…KPKNWKKFRE (412 aa)). Positions 68–95 (EQSALNSEASEDSEAMDEESKALKAAAE) are disordered. Over residues 85-95 (EESKALKAAAE) the composition is skewed to basic and acidic residues. The interval 119–442 (GKPKACYVTL…KPKNWKKFRE (324 aa)) is catalytic. A glycan (N-linked (GlcNAc...) asparagine) is linked at N197. Residue E329 is the Nucleophile of the active site.

This sequence belongs to the glycosyltransferase 15 family. Requires Mn(2+) as cofactor.

The protein localises to the golgi apparatus membrane. Its pathway is protein modification; protein glycosylation. Functionally, mannosyltransferase that transfers an alpha-D-mannosyl residue from GDP-mannose into lipid-linked oligosaccharide, forming an alpha-(1-&gt;2)-D-mannosyl-D-mannose linkage. Required for the attachment of the third mannose residue of O-linked saccharides. The sequence is that of Glycolipid 2-alpha-mannosyltransferase (KRE2) from Saccharomyces cerevisiae (strain ATCC 204508 / S288c) (Baker's yeast).